Reading from the N-terminus, the 437-residue chain is Dihydrofolate synthase/folylpolyglutamate synthase (437 aa).

28 to 30 (DLG) contacts 7,8-dihydropteroate. An ATP-binding site is contributed by 58–61 (GKGT). Residue serine 82 participates in Mg(2+) binding. 120-123 (TYFE) contacts 7,8-dihydropteroate. Glutamate 144 provides a ligand contact to Mg(2+). 151–153 (LDA) contributes to the 7,8-dihydropteroate binding site. Mg(2+) is bound at residue histidine 171. 3 residues coordinate ATP: asparagine 255, arginine 287, and aspartate 316.

It belongs to the folylpolyglutamate synthase family. As to quaternary structure, monomer. Mg(2+) is required as a cofactor.

It carries out the reaction 7,8-dihydropteroate + L-glutamate + ATP = 7,8-dihydrofolate + ADP + phosphate + H(+). It catalyses the reaction (6S)-5,6,7,8-tetrahydrofolyl-(gamma-L-Glu)(n) + L-glutamate + ATP = (6S)-5,6,7,8-tetrahydrofolyl-(gamma-L-Glu)(n+1) + ADP + phosphate + H(+). The enzyme catalyses 10-formyltetrahydrofolyl-(gamma-L-Glu)(n) + L-glutamate + ATP = 10-formyltetrahydrofolyl-(gamma-L-Glu)(n+1) + ADP + phosphate + H(+). The catalysed reaction is (6R)-5,10-methylenetetrahydrofolyl-(gamma-L-Glu)(n) + L-glutamate + ATP = (6R)-5,10-methylenetetrahydrofolyl-(gamma-L-Glu)(n+1) + ADP + phosphate + H(+). The protein operates within cofactor biosynthesis; tetrahydrofolate biosynthesis; 7,8-dihydrofolate from 2-amino-4-hydroxy-6-hydroxymethyl-7,8-dihydropteridine diphosphate and 4-aminobenzoate: step 2/2. It functions in the pathway cofactor biosynthesis; tetrahydrofolylpolyglutamate biosynthesis. Functionally, functions in two distinct reactions of the de novo folate biosynthetic pathway. Catalyzes the addition of a glutamate residue to dihydropteroate (7,8-dihydropteroate or H2Pte) to form dihydrofolate (7,8-dihydrofolate monoglutamate or H2Pte-Glu). Also catalyzes successive additions of L-glutamate to tetrahydrofolate or 10-formyltetrahydrofolate or 5,10-methylenetetrahydrofolate, leading to folylpolyglutamate derivatives. The polypeptide is Dihydrofolate synthase/folylpolyglutamate synthase (folC) (Haemophilus influenzae (strain ATCC 51907 / DSM 11121 / KW20 / Rd)).